Consider the following 316-residue polypeptide: 4-hydroxy-3-methylbut-2-enyl diphosphate reductase (316 aa).

Cys-12 provides a ligand contact to [4Fe-4S] cluster. Positions 41 and 74 each coordinate (2E)-4-hydroxy-3-methylbut-2-enyl diphosphate. Dimethylallyl diphosphate contacts are provided by His-41 and His-74. Isopentenyl diphosphate contacts are provided by His-41 and His-74. Residue Cys-96 coordinates [4Fe-4S] cluster. A (2E)-4-hydroxy-3-methylbut-2-enyl diphosphate-binding site is contributed by His-124. His-124 contacts dimethylallyl diphosphate. Residue His-124 participates in isopentenyl diphosphate binding. The active-site Proton donor is Glu-126. A (2E)-4-hydroxy-3-methylbut-2-enyl diphosphate-binding site is contributed by Thr-169. Residue Cys-199 coordinates [4Fe-4S] cluster. Ser-227, Ser-228, Asn-229, and Ser-271 together coordinate (2E)-4-hydroxy-3-methylbut-2-enyl diphosphate. Dimethylallyl diphosphate contacts are provided by Ser-227, Ser-228, Asn-229, and Ser-271. Isopentenyl diphosphate-binding residues include Ser-227, Ser-228, Asn-229, and Ser-271.

The protein belongs to the IspH family. [4Fe-4S] cluster serves as cofactor.

It catalyses the reaction isopentenyl diphosphate + 2 oxidized [2Fe-2S]-[ferredoxin] + H2O = (2E)-4-hydroxy-3-methylbut-2-enyl diphosphate + 2 reduced [2Fe-2S]-[ferredoxin] + 2 H(+). It carries out the reaction dimethylallyl diphosphate + 2 oxidized [2Fe-2S]-[ferredoxin] + H2O = (2E)-4-hydroxy-3-methylbut-2-enyl diphosphate + 2 reduced [2Fe-2S]-[ferredoxin] + 2 H(+). It participates in isoprenoid biosynthesis; dimethylallyl diphosphate biosynthesis; dimethylallyl diphosphate from (2E)-4-hydroxy-3-methylbutenyl diphosphate: step 1/1. It functions in the pathway isoprenoid biosynthesis; isopentenyl diphosphate biosynthesis via DXP pathway; isopentenyl diphosphate from 1-deoxy-D-xylulose 5-phosphate: step 6/6. Functionally, catalyzes the conversion of 1-hydroxy-2-methyl-2-(E)-butenyl 4-diphosphate (HMBPP) into a mixture of isopentenyl diphosphate (IPP) and dimethylallyl diphosphate (DMAPP). Acts in the terminal step of the DOXP/MEP pathway for isoprenoid precursor biosynthesis. This is 4-hydroxy-3-methylbut-2-enyl diphosphate reductase from Xanthomonas campestris pv. campestris (strain 8004).